A 119-amino-acid polypeptide reads, in one-letter code: Ribosome-binding factor A (119 aa).

Belongs to the RbfA family. Monomer. Binds 30S ribosomal subunits, but not 50S ribosomal subunits or 70S ribosomes.

It localises to the cytoplasm. Its function is as follows. One of several proteins that assist in the late maturation steps of the functional core of the 30S ribosomal subunit. Associates with free 30S ribosomal subunits (but not with 30S subunits that are part of 70S ribosomes or polysomes). Required for efficient processing of 16S rRNA. May interact with the 5'-terminal helix region of 16S rRNA. This Ligilactobacillus salivarius (strain UCC118) (Lactobacillus salivarius) protein is Ribosome-binding factor A.